Consider the following 250-residue polypeptide: MCCAALAPPMAATVGPESIWLWIGTIGMTLGTLYFVGRGRGVRDRKMQEFYIITIFITTIAAAMYFAMATGFGVTEVMVGDEALTIYWARYADWLFTTPLLLLDLSLLAGANRNTIATLIGLDVFMIGTGAIAALSSTPGTRIAWWAISTGALLALLYVLVGTLSENARNRAPEVASLFGRLRNLVIALWFLYPVVWILGTEGTFGILPLYWETAAFMVLDLSAKVGFGVILLQSRSVLERVATPTAAPT.

Residues Met-1 to Ser-18 are Extracellular-facing. The chain crosses the membrane as a helical span at residues Ile-19 to Gly-37. The Cytoplasmic portion of the chain corresponds to Arg-38 to Tyr-51. The chain crosses the membrane as a helical span at residues Ile-52–Thr-70. Residues Gly-71–Ile-86 are Extracellular-facing. A helical transmembrane segment spans residues Tyr-87 to Asp-104. Over Leu-105–Thr-115 the chain is Cytoplasmic. The chain crosses the membrane as a helical span at residues Ile-116–Leu-135. Topologically, residues Ser-136 to Arg-142 are extracellular. The helical transmembrane segment at Ile-143–Gly-162 threads the bilayer. The Cytoplasmic portion of the chain corresponds to Thr-163–Gly-180. A helical transmembrane segment spans residues Arg-181–Leu-199. The Extracellular portion of the chain corresponds to Gly-200–Trp-212. A helical membrane pass occupies residues Glu-213–Leu-232. An N6-(retinylidene)lysine modification is found at Lys-225. Residues Leu-233–Thr-250 lie on the Cytoplasmic side of the membrane.

This sequence belongs to the archaeal/bacterial/fungal opsin family.

It is found in the cell membrane. Light-driven proton pump. This chain is Bacteriorhodopsin (bop), found in Haloterrigena sp. (strain arg-4).